We begin with the raw amino-acid sequence, 292 residues long: Ribosomal protein L11 methyltransferase (292 aa).

Residues Thr143, Gly164, Asp186, and Asn228 each contribute to the S-adenosyl-L-methionine site.

This sequence belongs to the methyltransferase superfamily. PrmA family.

The protein resides in the cytoplasm. The enzyme catalyses L-lysyl-[protein] + 3 S-adenosyl-L-methionine = N(6),N(6),N(6)-trimethyl-L-lysyl-[protein] + 3 S-adenosyl-L-homocysteine + 3 H(+). Its function is as follows. Methylates ribosomal protein L11. This chain is Ribosomal protein L11 methyltransferase, found in Aeromonas salmonicida (strain A449).